Reading from the N-terminus, the 225-residue chain is Ribonuclease 3 (225 aa).

Residues 7–129 enclose the RNase III domain; sequence LPRLGRILGY…IIGAIYLDAD (123 aa). Glutamate 42 contributes to the Mg(2+) binding site. Aspartate 46 is an active-site residue. 2 residues coordinate Mg(2+): aspartate 115 and glutamate 118. Glutamate 118 is an active-site residue. In terms of domain architecture, DRBM spans 155–225; sequence DPKTLLQEHL…AAEVLERIKK (71 aa).

This sequence belongs to the ribonuclease III family. Homodimer. Mg(2+) is required as a cofactor.

Its subcellular location is the cytoplasm. It carries out the reaction Endonucleolytic cleavage to 5'-phosphomonoester.. Functionally, digests double-stranded RNA. Involved in the processing of primary rRNA transcript to yield the immediate precursors to the large and small rRNAs (23S and 16S). Processes some mRNAs, and tRNAs when they are encoded in the rRNA operon. Processes pre-crRNA and tracrRNA of type II CRISPR loci if present in the organism. The protein is Ribonuclease 3 of Shewanella loihica (strain ATCC BAA-1088 / PV-4).